A 374-amino-acid chain; its full sequence is Queuine tRNA-ribosyltransferase (374 aa).

Asp89 serves as the catalytic Proton acceptor. Substrate contacts are provided by residues 89–93, Asp143, Gln187, and Gly214; that span reads DSGGF. Residues 245–251 are RNA binding; it reads GVGKPED. Asp264 acts as the Nucleophile in catalysis. Positions 269 to 273 are RNA binding; important for wobble base 34 recognition; it reads TRNAR. Zn(2+) contacts are provided by Cys302, Cys304, Cys307, and His333.

It belongs to the queuine tRNA-ribosyltransferase family. As to quaternary structure, homodimer. Within each dimer, one monomer is responsible for RNA recognition and catalysis, while the other monomer binds to the replacement base PreQ1. Zn(2+) is required as a cofactor.

It carries out the reaction 7-aminomethyl-7-carbaguanine + guanosine(34) in tRNA = 7-aminomethyl-7-carbaguanosine(34) in tRNA + guanine. Its pathway is tRNA modification; tRNA-queuosine biosynthesis. Catalyzes the base-exchange of a guanine (G) residue with the queuine precursor 7-aminomethyl-7-deazaguanine (PreQ1) at position 34 (anticodon wobble position) in tRNAs with GU(N) anticodons (tRNA-Asp, -Asn, -His and -Tyr). Catalysis occurs through a double-displacement mechanism. The nucleophile active site attacks the C1' of nucleotide 34 to detach the guanine base from the RNA, forming a covalent enzyme-RNA intermediate. The proton acceptor active site deprotonates the incoming PreQ1, allowing a nucleophilic attack on the C1' of the ribose to form the product. After dissociation, two additional enzymatic reactions on the tRNA convert PreQ1 to queuine (Q), resulting in the hypermodified nucleoside queuosine (7-(((4,5-cis-dihydroxy-2-cyclopenten-1-yl)amino)methyl)-7-deazaguanosine). The chain is Queuine tRNA-ribosyltransferase from Shewanella sp. (strain W3-18-1).